A 591-amino-acid polypeptide reads, in one-letter code: MKGAEAIIKALEAEGVKIIFGYPGGAMLPFYDALYDSDLVHILTRHEQAAAHAADGFARASGEAGVCVSTSGPGATNLVTGIATAYADSSPVIALTGQVPTKLIGNDAFQEIDALGLFMPITKHNFQIKKPEEIPETFRAAFEIATTGRPGPVHIDLPKDVQDGEIDIEKYPIPAKVDLPGYKPKTVGHPLQIKKAAKLIAESERPVILAGGGVIISGASEELLRLAEFVKIPVCTTLMGKGCFPEDHPLALGMVGMHGTKAANYAVTECDVLIAIGCRFSDRVTGDIRYFAPEAKIIHIDIDPAEIGKNVRADIPIVGDAKNVLRDLLAALIALEIKDKETWLERIYELKKLSIPMMDFDDKPIKPQRFVKDLMEVLNEIDSKLKNTIITTDVGQNQMWMAHFFKTKMPRSFLASGGLGTMGFGFPAAIGAKVAKPYANVISITGDGGFLMNSQELATISEYDIPVVICIFDNRTLGMVYQWQNLYYGQRQSEVHLGESPDFVKLAESYGVKADRIISPDEIKEKLKEAILSNEPYLLDIVIDPAEALPMVPPGGRLTNIVQPIRVEPKIKKPQFDEIKKIRDMAAVKEF.

Residue glutamate 47 participates in thiamine diphosphate binding. FAD-binding positions include arginine 149, 258–279, and 301–320; these read HGTK…IGCR and DIDP…IVGD. The thiamine pyrophosphate binding stretch occupies residues 396-476; it reads QNQMWMAHFF…VVICIFDNRT (81 aa). Mg(2+) is bound by residues aspartate 447 and asparagine 474.

The protein belongs to the TPP enzyme family. As to quaternary structure, dimer of large and small chains. The cofactor is Mg(2+). Requires thiamine diphosphate as cofactor.

It catalyses the reaction 2 pyruvate + H(+) = (2S)-2-acetolactate + CO2. It functions in the pathway amino-acid biosynthesis; L-isoleucine biosynthesis; L-isoleucine from 2-oxobutanoate: step 1/4. The protein operates within amino-acid biosynthesis; L-valine biosynthesis; L-valine from pyruvate: step 1/4. The sequence is that of Probable acetolactate synthase large subunit (ilvB) from Methanocaldococcus jannaschii (strain ATCC 43067 / DSM 2661 / JAL-1 / JCM 10045 / NBRC 100440) (Methanococcus jannaschii).